Consider the following 452-residue polypeptide: Bifunctional protein GlmU (452 aa).

Residues 1–231 (MSRTCLAVIL…EAELAGCNNR (231 aa)) are pyrophosphorylase. UDP-N-acetyl-alpha-D-glucosamine is bound by residues 10–13 (LAAG), lysine 24, glutamine 77, 82–83 (GT), 105–107 (YGD), glycine 143, glutamate 157, asparagine 172, and asparagine 229. Aspartate 107 contacts Mg(2+). Residue asparagine 229 coordinates Mg(2+). The segment at 232–252 (AELAVIEKLWQERRRHELMLS) is linker. An N-acetyltransferase region spans residues 253–452 (GVSMIAPETV…MAIKAFSGKV (200 aa)). UDP-N-acetyl-alpha-D-glucosamine is bound by residues arginine 318 and lysine 336. The active-site Proton acceptor is histidine 348. Residues tyrosine 351 and asparagine 362 each coordinate UDP-N-acetyl-alpha-D-glucosamine. Acetyl-CoA contacts are provided by residues alanine 365, 371-372 (NY), serine 390, serine 408, and arginine 425.

The protein in the N-terminal section; belongs to the N-acetylglucosamine-1-phosphate uridyltransferase family. In the C-terminal section; belongs to the transferase hexapeptide repeat family. Homotrimer. Mg(2+) serves as cofactor.

The protein localises to the cytoplasm. The catalysed reaction is alpha-D-glucosamine 1-phosphate + acetyl-CoA = N-acetyl-alpha-D-glucosamine 1-phosphate + CoA + H(+). It carries out the reaction N-acetyl-alpha-D-glucosamine 1-phosphate + UTP + H(+) = UDP-N-acetyl-alpha-D-glucosamine + diphosphate. It participates in nucleotide-sugar biosynthesis; UDP-N-acetyl-alpha-D-glucosamine biosynthesis; N-acetyl-alpha-D-glucosamine 1-phosphate from alpha-D-glucosamine 6-phosphate (route II): step 2/2. The protein operates within nucleotide-sugar biosynthesis; UDP-N-acetyl-alpha-D-glucosamine biosynthesis; UDP-N-acetyl-alpha-D-glucosamine from N-acetyl-alpha-D-glucosamine 1-phosphate: step 1/1. Its pathway is bacterial outer membrane biogenesis; LPS lipid A biosynthesis. In terms of biological role, catalyzes the last two sequential reactions in the de novo biosynthetic pathway for UDP-N-acetylglucosamine (UDP-GlcNAc). The C-terminal domain catalyzes the transfer of acetyl group from acetyl coenzyme A to glucosamine-1-phosphate (GlcN-1-P) to produce N-acetylglucosamine-1-phosphate (GlcNAc-1-P), which is converted into UDP-GlcNAc by the transfer of uridine 5-monophosphate (from uridine 5-triphosphate), a reaction catalyzed by the N-terminal domain. The polypeptide is Bifunctional protein GlmU (Allorhizobium ampelinum (strain ATCC BAA-846 / DSM 112012 / S4) (Agrobacterium vitis (strain S4))).